Reading from the N-terminus, the 78-residue chain is Large ribosomal subunit protein bL28 (78 aa).

It belongs to the bacterial ribosomal protein bL28 family.

The protein is Large ribosomal subunit protein bL28 of Thermosynechococcus vestitus (strain NIES-2133 / IAM M-273 / BP-1).